The sequence spans 255 residues: MFHIGSLVVLCGLLAPTTALLEALPTPLGQTLPLAVTPALAPSPPDLAGSLTGALSNGLLSEGLLGILENLPLLDILKTRGNAPSGLLGSLLGKVTSLTPLLNNIIELKITNPQLLELGLVQSPDGHRLYVTIPLGMILNVKTSLVGSLLKLAVKLNITVELLAVTDEQKHVHLVVGNCTHSPGSLQIFLLDGLGSLPIQSFVDNLTGILNDVLPGLVQGKVCPLVNAVLSRLDVTLVHSIVNALIHGLQFVIKV.

Positions 1 to 19 (MFHIGSLVVLCGLLAPTTA) are cleaved as a signal peptide. Residues 87–92 (LLGSLL) form an important for surfactant activity and antibacterial properties region. N-linked (GlcNAc...) asparagine glycans are attached at residues Asn157, Asn178, and Asn205. Cys179 and Cys223 are joined by a disulfide.

This sequence belongs to the BPI/LBP/Plunc superfamily. Plunc family. In terms of assembly, monomer. Interacts (via N-terminus) with SCNN1B, a subunit of the heterotrimeric epithelial sodium channel (ENaC); this inhibits proteolytic activation of ENaC. As to expression, expressed in trachea, and at lower levels in nasal epithelium.

The protein resides in the secreted. In terms of biological role, lipid-binding protein which shows high specificity for the surfactant phospholipid dipalmitoylphosphatidylcholine (DPPC). Plays a role in the innate immune responses of the upper airways. Reduces the surface tension in secretions from airway epithelia and inhibits the formation of biofilm by pathogenic Gram-negative bacteria, such as P.aeruginosa and K.pneumoniae. Negatively regulates proteolytic cleavage of SCNN1G, an event that is required for activation of the epithelial sodium channel (ENaC), and thereby contributes to airway surface liquid homeostasis and proper clearance of mucus. Plays a role in the airway inflammatory response after exposure to irritants. May attract macrophages and neutrophils. In Bos taurus (Bovine), this protein is BPI fold-containing family A member 1 (BPIFA1).